A 437-amino-acid polypeptide reads, in one-letter code: Eukaryotic peptide chain release factor subunit 1 (437 aa).

This sequence belongs to the eukaryotic release factor 1 family. Heterodimer of two subunits, one of which binds GTP.

Its subcellular location is the cytoplasm. Its function is as follows. Directs the termination of nascent peptide synthesis (translation) in response to the termination codons UAA and possibly also UAG and UGA. This chain is Eukaryotic peptide chain release factor subunit 1 (eRF1), found in Didinium nasutum.